The primary structure comprises 720 residues: Nucleoporin 88 (720 aa).

A coiled-coil region spans residues 584–611 (LALCREDRKSLTEAAERLADKYEDAKYR).

Widely expressed. Higher levels of expression are detected in highly proliferative frontal regions of the embryo, e.g. brain, eye and anterior trunk.

The protein resides in the nucleus. It is found in the nuclear pore complex. In terms of biological role, component of the nuclear pore complex. This chain is Nucleoporin 88, found in Danio rerio (Zebrafish).